The following is a 258-amino-acid chain: 6-phosphogluconolactonase (258 aa).

Position 2 is an N-acetylalanine (Ala2). Ser49 is subject to Phosphoserine. Lys180 bears the N6-acetyllysine mark.

Belongs to the glucosamine/galactosamine-6-phosphate isomerase family. 6-phosphogluconolactonase subfamily.

Its subcellular location is the cytoplasm. The enzyme catalyses 6-phospho-D-glucono-1,5-lactone + H2O = 6-phospho-D-gluconate + H(+). It functions in the pathway carbohydrate degradation; pentose phosphate pathway; D-ribulose 5-phosphate from D-glucose 6-phosphate (oxidative stage): step 2/3. In terms of biological role, hydrolysis of 6-phosphogluconolactone to 6-phosphogluconate. In Homo sapiens (Human), this protein is 6-phosphogluconolactonase.